The following is a 222-amino-acid chain: uncharacterized protein (222 aa).

The segment at A142–L222 is disordered. Residues Q160–A169 show a composition bias toward low complexity. The segment covering P182–R196 has biased composition (basic residues).

The protein belongs to the Rv1128c/1148c/1588c/1702c/1945/3466 family.

This is an uncharacterized protein from Mycobacterium tuberculosis (strain ATCC 25618 / H37Rv).